We begin with the raw amino-acid sequence, 1412 residues long: DNA-directed RNA polymerase subunit beta' (1412 aa).

Positions 70, 72, 85, and 88 each coordinate Zn(2+). Residues D460, D462, and D464 each coordinate Mg(2+). Residues C819, C893, C900, and C903 each contribute to the Zn(2+) site. A disordered region spans residues 1392–1412 (EEAFEFGTPSTPAEEPQHPAE).

Belongs to the RNA polymerase beta' chain family. The RNAP catalytic core consists of 2 alpha, 1 beta, 1 beta' and 1 omega subunit. When a sigma factor is associated with the core the holoenzyme is formed, which can initiate transcription. Requires Mg(2+) as cofactor. Zn(2+) serves as cofactor.

The enzyme catalyses RNA(n) + a ribonucleoside 5'-triphosphate = RNA(n+1) + diphosphate. DNA-dependent RNA polymerase catalyzes the transcription of DNA into RNA using the four ribonucleoside triphosphates as substrates. The protein is DNA-directed RNA polymerase subunit beta' of Burkholderia thailandensis (strain ATCC 700388 / DSM 13276 / CCUG 48851 / CIP 106301 / E264).